Consider the following 727-residue polypeptide: Elongation factor 2 (727 aa).

A tr-type G domain is found at 19-260; the sequence is DQIRNMGICA…MAITHLPNPL (242 aa). Residues 28-35, 94-98, and 148-151 each bind GTP; these read AHIDHGKT, DTPGH, and NKVD. Residue H603 is modified to Diphthamide.

It belongs to the TRAFAC class translation factor GTPase superfamily. Classic translation factor GTPase family. EF-G/EF-2 subfamily.

It localises to the cytoplasm. In terms of biological role, catalyzes the GTP-dependent ribosomal translocation step during translation elongation. During this step, the ribosome changes from the pre-translocational (PRE) to the post-translocational (POST) state as the newly formed A-site-bound peptidyl-tRNA and P-site-bound deacylated tRNA move to the P and E sites, respectively. Catalyzes the coordinated movement of the two tRNA molecules, the mRNA and conformational changes in the ribosome. This is Elongation factor 2 from Methanococcus maripaludis (strain C6 / ATCC BAA-1332).